A 474-amino-acid chain; its full sequence is L-lactate permease (474 aa).

A run of 11 helical transmembrane segments spans residues 4 to 21, 28 to 48, 63 to 85, 105 to 127, 142 to 164, 177 to 199, 209 to 231, 238 to 255, 281 to 303, 324 to 346, and 387 to 409; these read AILA…LAVF, ACFI…HFSI, FWPI…ASGG, LILA…AVAI, AALI…LPVT, LSVI…LVSL, GVFG…VSNY, SIIG…FVNL, FILV…QLLA, WLTS…QGMS, and IAVS…IGTL.

This sequence belongs to the lactate permease family.

The protein localises to the cell membrane. In terms of biological role, plays a role in L-lactate utilization. This is L-lactate permease (lctP) from Streptococcus iniae (Streptococcus shiloi).